The chain runs to 101 residues: Small ribosomal subunit protein uS14 (101 aa).

It belongs to the universal ribosomal protein uS14 family. As to quaternary structure, part of the 30S ribosomal subunit. Contacts proteins S3 and S10.

In terms of biological role, binds 16S rRNA, required for the assembly of 30S particles and may also be responsible for determining the conformation of the 16S rRNA at the A site. This chain is Small ribosomal subunit protein uS14, found in Polynucleobacter asymbioticus (strain DSM 18221 / CIP 109841 / QLW-P1DMWA-1) (Polynucleobacter necessarius subsp. asymbioticus).